We begin with the raw amino-acid sequence, 171 residues long: Transcription factor E (171 aa).

In terms of domain architecture, HTH TFE/IIEalpha-type spans 5–91 (DNKAVRGYIQ…LWKLDLDNSV (87 aa)).

The protein belongs to the TFE family. As to quaternary structure, monomer. Interaction with RNA polymerase subunits RpoF and RpoE is necessary for Tfe stimulatory transcription activity. Able to interact with Tbp and RNA polymerase in the absence of DNA promoter. Interacts both with the preinitiation and elongation complexes.

Transcription factor that plays a role in the activation of archaeal genes transcribed by RNA polymerase. Facilitates transcription initiation by enhancing TATA-box recognition by TATA-box-binding protein (Tbp), and transcription factor B (Tfb) and RNA polymerase recruitment. Not absolutely required for transcription in vitro, but particularly important in cases where Tbp or Tfb function is not optimal. It dynamically alters the nucleic acid-binding properties of RNA polymerases by stabilizing the initiation complex and destabilizing elongation complexes. Seems to translocate with the RNA polymerase following initiation and acts by binding to the non template strand of the transcription bubble in elongation complexes. This is Transcription factor E from Methanocella arvoryzae (strain DSM 22066 / NBRC 105507 / MRE50).